We begin with the raw amino-acid sequence, 90 residues long: Mitochondrial import inner membrane translocase subunit Tim8 A (90 aa).

Residues 36–59 carry the Twin CX3C motif motif; sequence CWEKCMDKPGPKLDSRTEVCFVNC. Disulfide bonds link C36–C59 and C40–C55.

The protein belongs to the small Tim family. In terms of assembly, heterohexamer; composed of 3 copies of TIMM8A and 3 copies of TIMM13, named soluble 70 kDa complex. Associates with the TIM22 complex, whose core is composed of TIMM22.

It is found in the mitochondrion inner membrane. In terms of biological role, mitochondrial intermembrane chaperone that participates in the import and insertion of some multi-pass transmembrane proteins into the mitochondrial inner membrane. Also required for the transfer of beta-barrel precursors from the TOM complex to the sorting and assembly machinery (SAM complex) of the outer membrane. Acts as a chaperone-like protein that protects the hydrophobic precursors from aggregation and guide them through the mitochondrial intermembrane space. The TIMM8-TIMM13 complex mediates the import of some proteins while the predominant TIMM9-TIMM10 70 kDa complex mediates the import of much more proteins. The protein is Mitochondrial import inner membrane translocase subunit Tim8 A (timm8a) of Danio rerio (Zebrafish).